The following is a 347-amino-acid chain: 5-deoxyribose 1-phosphate isomerase (347 aa).

Substrate is bound by residues Arg-48–Ala-50, Arg-91, and Gln-198. Asp-239 functions as the Proton donor in the catalytic mechanism. Asn-249–Lys-250 is a substrate binding site.

This sequence belongs to the EIF-2B alpha/beta/delta subunits family. DrdI subfamily.

It catalyses the reaction 5-deoxy-alpha-D-ribose 1-phosphate = 5-deoxy-D-ribulose 1-phosphate. It participates in carbohydrate degradation. Functionally, catalyzes the isomerization of 5-deoxy-alpha-D-ribose 1-phosphate to 5-deoxy-D-ribulose 1-phosphate, as part of a 5-deoxyribose salvage pathway that recycles this toxic radical SAM enzyme by-product to mainstream metabolites. In Bacillus thuringiensis subsp. konkukian (strain 97-27), this protein is 5-deoxyribose 1-phosphate isomerase.